The sequence spans 764 residues: Zygote defective protein 12 (764 aa).

Over residues 1 to 20 (MLDLTNQESDSSENGNSKYA) the composition is skewed to polar residues. The segment at 1 to 33 (MLDLTNQESDSSENGNSKYADSTDGRGIGTSRR) is disordered. Residues 1-236 (MLDLTNQESD…ESSVITNGNG (236 aa)) are interaction with dli-1. A Calponin-homology (CH) domain is found at 43–169 (RKDLADLVFW…VSLAFIGKTQ (127 aa)). Coiled-coil stretches lie at residues 244 to 405 (LSAN…HVKT) and 436 to 692 (GLES…NRLI). Residues 732-752 (ALPWRFGISSMLIIFMVWFFI) traverse the membrane as a helical segment.

This sequence belongs to the hook family. Homodimer. Interacts with the dynein subunit dli-1 via its N-terminus. May interact with microtubules.

It localises to the nucleus membrane. It is found in the cytoplasm. The protein resides in the cytoskeleton. The protein localises to the microtubule organizing center. Its subcellular location is the centrosome. Functionally, cytoskeletal linker protein, which is essential for attachment of the centrosome to the nucleus. Required for dynein localization to the nuclear envelope. This Caenorhabditis briggsae protein is Zygote defective protein 12 (zyg-12).